We begin with the raw amino-acid sequence, 911 residues long: Protein translocase subunit SecA (911 aa).

Residues glutamine 86, 104–108 (GEGKT), and aspartate 494 contribute to the ATP site. The segment at 856 to 911 (VEGIDAPQRPAQLRFTGPSEDGQSAVTRSGTDSGATVAAGTNRRSRRQAERRGRRG) is disordered. A compositionally biased stretch (polar residues) spans 876 to 889 (DGQSAVTRSGTDSG). A compositionally biased stretch (basic and acidic residues) spans 902 to 911 (RQAERRGRRG).

The protein belongs to the SecA family. Monomer and homodimer. Part of the essential Sec protein translocation apparatus which comprises SecA, SecYEG and auxiliary proteins SecDF. Other proteins may also be involved.

Its subcellular location is the cell membrane. The protein resides in the cytoplasm. The catalysed reaction is ATP + H2O + cellular proteinSide 1 = ADP + phosphate + cellular proteinSide 2.. Functionally, part of the Sec protein translocase complex. Interacts with the SecYEG preprotein conducting channel. Has a central role in coupling the hydrolysis of ATP to the transfer of proteins into and across the cell membrane, serving as an ATP-driven molecular motor driving the stepwise translocation of polypeptide chains across the membrane. This Micrococcus luteus (strain ATCC 4698 / DSM 20030 / JCM 1464 / CCM 169 / CCUG 5858 / IAM 1056 / NBRC 3333 / NCIMB 9278 / NCTC 2665 / VKM Ac-2230) (Micrococcus lysodeikticus) protein is Protein translocase subunit SecA.